Here is a 38-residue protein sequence, read N- to C-terminus: Large ribosomal subunit protein bL36 (38 aa).

This sequence belongs to the bacterial ribosomal protein bL36 family.

This Lactobacillus acidophilus (strain ATCC 700396 / NCK56 / N2 / NCFM) protein is Large ribosomal subunit protein bL36.